The chain runs to 62 residues: Omega-lycotoxin-Am1e (62 aa).

A propeptide spanning residues Glu-1 to Arg-15 is cleaved from the precursor. Disulfide bonds link Cys-19/Cys-34, Cys-26/Cys-39, Cys-33/Cys-59, and Cys-41/Cys-57.

This sequence belongs to the neurotoxin omega-lctx family. In terms of tissue distribution, expressed by the venom gland.

It is found in the secreted. Its function is as follows. Modulates Cav2.1/CACNA1A voltage-gated calcium channels (P/Q-type currents) in rat cerebellar Purkinje cells and hippocampal CA1-CA3 neurons. At saturating concentrations (&gt;10 nM) decelerates activation kinetics and slightly increases peak amplitude without affecting deactivation kinetics. In vivo, does not cause death when intravenously injected into mice. In rat models, through its activity on Cav2.1/CACNA1A, has an ameliorative effect on memory defects provoked by hyperstimulation of N-methyl-D-aspartate receptors (NMDARs) in the hippocampus. The protein is Omega-lycotoxin-Am1e of Alopecosa marikovskyi (Wolf spider).